The sequence spans 265 residues: Lipopolysaccharide core heptose(I) kinase WaaP (265 aa).

The active site involves Asp-162.

It belongs to the protein kinase superfamily. KdkA/RfaP family. It depends on Mg(2+) as a cofactor.

It catalyses the reaction an L-alpha-D-Hep-(1-&gt;3)-L-alpha-D-Hep-(1-&gt;5)-[alpha-Kdo-(2-&gt;4)]-alpha-Kdo-(2-&gt;6)-lipid A + ATP = an L-alpha-D-Hep-(1-&gt;3)-4-O-phospho-L-alpha-D-Hep-(1-&gt;5)-[alpha-Kdo-(2-&gt;4)]-alpha-Kdo-(2-&gt;6)-lipid A + ADP + H(+). It carries out the reaction L-alpha-D-Hep-(1-&gt;3)-L-alpha-D-Hep-(1-&gt;5)-[alpha-Kdo-(2-&gt;4)]-alpha-Kdo-(2-&gt;6)-lipid A (E. coli) + ATP = L-alpha-D-Hep-(1-&gt;3)-4-O-phospho-L-alpha-D-Hep-(1-&gt;5)-[alpha-Kdo-(2-&gt;4)]-alpha-Kdo-(2-&gt;6)-lipid A (E. coli) + ADP + H(+). It functions in the pathway bacterial outer membrane biogenesis; LPS core biosynthesis. Kinase involved in the biosynthesis of the core oligosaccharide region of lipopolysaccharide (LPS). Catalyzes the phosphorylation of heptose I (HepI), the first heptose added to the Kdo2-lipid A module. This chain is Lipopolysaccharide core heptose(I) kinase WaaP, found in Escherichia coli (strain K12).